Reading from the N-terminus, the 39-residue chain is Pro-opiomelanocortin (39 aa).

Serine 1 is modified (N-acetylserine). Valine 13 is modified (valine amide). Serine 31 bears the Phosphoserine mark.

The protein belongs to the POMC family. As to expression, expressed in the pituitary gland.

The protein localises to the secreted. In terms of biological role, precursor protein for pituitary hormones that regulate stress and environmental adaptation. Its function is as follows. Stimulates the adrenal glands to release cortisol. Functionally, anorexigenic peptide. Increases the pigmentation of skin by increasing melanin production in melanocytes. The chain is Pro-opiomelanocortin (POMC) from Oryctolagus cuniculus (Rabbit).